A 208-amino-acid polypeptide reads, in one-letter code: Small ribosomal subunit protein uS4 (208 aa).

Positions Arg-95–Asn-157 constitute an S4 RNA-binding domain.

This sequence belongs to the universal ribosomal protein uS4 family. Part of the 30S ribosomal subunit. Contacts protein S5. The interaction surface between S4 and S5 is involved in control of translational fidelity.

In terms of biological role, one of the primary rRNA binding proteins, it binds directly to 16S rRNA where it nucleates assembly of the body of the 30S subunit. With S5 and S12 plays an important role in translational accuracy. The protein is Small ribosomal subunit protein uS4 of Borrelia garinii subsp. bavariensis (strain ATCC BAA-2496 / DSM 23469 / PBi) (Borreliella bavariensis).